Reading from the N-terminus, the 312-residue chain is Glyoxylate/hydroxypyruvate reductase A (312 aa).

R227 is a catalytic residue. The Proton donor role is filled by H275.

This sequence belongs to the D-isomer specific 2-hydroxyacid dehydrogenase family. GhrA subfamily.

The protein localises to the cytoplasm. The enzyme catalyses glycolate + NADP(+) = glyoxylate + NADPH + H(+). The catalysed reaction is (R)-glycerate + NAD(+) = 3-hydroxypyruvate + NADH + H(+). It catalyses the reaction (R)-glycerate + NADP(+) = 3-hydroxypyruvate + NADPH + H(+). Functionally, catalyzes the NADPH-dependent reduction of glyoxylate and hydroxypyruvate into glycolate and glycerate, respectively. This chain is Glyoxylate/hydroxypyruvate reductase A, found in Escherichia coli O17:K52:H18 (strain UMN026 / ExPEC).